A 470-amino-acid chain; its full sequence is 3-isopropylmalate dehydratase large subunit (470 aa).

Residues cysteine 349, cysteine 410, and cysteine 413 each contribute to the [4Fe-4S] cluster site.

This sequence belongs to the aconitase/IPM isomerase family. LeuC type 1 subfamily. In terms of assembly, heterodimer of LeuC and LeuD. [4Fe-4S] cluster is required as a cofactor.

The catalysed reaction is (2R,3S)-3-isopropylmalate = (2S)-2-isopropylmalate. The protein operates within amino-acid biosynthesis; L-leucine biosynthesis; L-leucine from 3-methyl-2-oxobutanoate: step 2/4. Functionally, catalyzes the isomerization between 2-isopropylmalate and 3-isopropylmalate, via the formation of 2-isopropylmaleate. This chain is 3-isopropylmalate dehydratase large subunit, found in Nitrosomonas europaea (strain ATCC 19718 / CIP 103999 / KCTC 2705 / NBRC 14298).